A 231-amino-acid chain; its full sequence is Phosphatidylserine decarboxylase proenzyme (231 aa).

Catalysis depends on S188, which acts as the Schiff-base intermediate with substrate; via pyruvic acid. Residue S188 is modified to Pyruvic acid (Ser); by autocatalysis.

Belongs to the phosphatidylserine decarboxylase family. PSD-A subfamily. In terms of assembly, heterodimer of a large membrane-associated beta subunit and a small pyruvoyl-containing alpha subunit. It depends on pyruvate as a cofactor. Is synthesized initially as an inactive proenzyme. Formation of the active enzyme involves a self-maturation process in which the active site pyruvoyl group is generated from an internal serine residue via an autocatalytic post-translational modification. Two non-identical subunits are generated from the proenzyme in this reaction, and the pyruvate is formed at the N-terminus of the alpha chain, which is derived from the carboxyl end of the proenzyme. The post-translation cleavage follows an unusual pathway, termed non-hydrolytic serinolysis, in which the side chain hydroxyl group of the serine supplies its oxygen atom to form the C-terminus of the beta chain, while the remainder of the serine residue undergoes an oxidative deamination to produce ammonia and the pyruvoyl prosthetic group on the alpha chain.

It localises to the cell membrane. It catalyses the reaction a 1,2-diacyl-sn-glycero-3-phospho-L-serine + H(+) = a 1,2-diacyl-sn-glycero-3-phosphoethanolamine + CO2. Its pathway is phospholipid metabolism; phosphatidylethanolamine biosynthesis; phosphatidylethanolamine from CDP-diacylglycerol: step 2/2. Catalyzes the formation of phosphatidylethanolamine (PtdEtn) from phosphatidylserine (PtdSer). The polypeptide is Phosphatidylserine decarboxylase proenzyme (Rickettsia peacockii (strain Rustic)).